Reading from the N-terminus, the 123-residue chain is uncharacterized protein (123 aa).

An N-terminal signal peptide occupies residues Met-1–Ala-19. Residue Cys-20 is the site of N-palmitoyl cysteine attachment. Residue Cys-20 is the site of S-diacylglycerol cysteine attachment.

The protein belongs to the MG439/MG440 family.

The protein resides in the cell membrane. This is an uncharacterized protein from Mycoplasma pneumoniae (strain ATCC 29342 / M129 / Subtype 1) (Mycoplasmoides pneumoniae).